The following is a 368-amino-acid chain: Carbamoyl phosphate synthase small chain (368 aa).

A CPSase region spans residues 1 to 178 (MKAVLGLEDG…GAECAWKGSG (178 aa)). Residues S45, G230, and G232 each contribute to the L-glutamine site. The Glutamine amidotransferase type-1 domain maps to 182-368 (HAVVVDLGIK…KVVKVLGGDL (187 aa)). The active-site Nucleophile is the C257. Residues F258, Q261, N299, G301, and Y302 each contribute to the L-glutamine site. Catalysis depends on residues H342 and E344.

The protein belongs to the CarA family. Composed of two chains; the small (or glutamine) chain promotes the hydrolysis of glutamine to ammonia, which is used by the large (or ammonia) chain to synthesize carbamoyl phosphate. Tetramer of heterodimers (alpha,beta)4.

The enzyme catalyses hydrogencarbonate + L-glutamine + 2 ATP + H2O = carbamoyl phosphate + L-glutamate + 2 ADP + phosphate + 2 H(+). It carries out the reaction L-glutamine + H2O = L-glutamate + NH4(+). It participates in amino-acid biosynthesis; L-arginine biosynthesis; carbamoyl phosphate from bicarbonate: step 1/1. It functions in the pathway pyrimidine metabolism; UMP biosynthesis via de novo pathway; (S)-dihydroorotate from bicarbonate: step 1/3. In terms of biological role, small subunit of the glutamine-dependent carbamoyl phosphate synthetase (CPSase). CPSase catalyzes the formation of carbamoyl phosphate from the ammonia moiety of glutamine, carbonate, and phosphate donated by ATP, constituting the first step of 2 biosynthetic pathways, one leading to arginine and/or urea and the other to pyrimidine nucleotides. The small subunit (glutamine amidotransferase) binds and cleaves glutamine to supply the large subunit with the substrate ammonia. The polypeptide is Carbamoyl phosphate synthase small chain (Methanosarcina acetivorans (strain ATCC 35395 / DSM 2834 / JCM 12185 / C2A)).